The chain runs to 556 residues: Probable Xaa-Pro aminopeptidase SS1G_06948 (556 aa).

Residues D305, D316, E460, and E501 each contribute to the Mn(2+) site.

It belongs to the peptidase M24B family. It depends on Mn(2+) as a cofactor.

It carries out the reaction Release of any N-terminal amino acid, including proline, that is linked to proline, even from a dipeptide or tripeptide.. Functionally, catalyzes the removal of a penultimate prolyl residue from the N-termini of peptides. This chain is Probable Xaa-Pro aminopeptidase SS1G_06948, found in Sclerotinia sclerotiorum (strain ATCC 18683 / 1980 / Ss-1) (White mold).